A 387-amino-acid polypeptide reads, in one-letter code: NADPH-dependent aldehyde reductase YqhD (387 aa).

NADP(+) is bound by residues G38, S40, N68, G95, S96, D99, T138, N147, G149, K160, Y179, and T182. Zn(2+) is bound by residues D194, H198, H267, and H281.

It belongs to the iron-containing alcohol dehydrogenase family. As to quaternary structure, homodimer. The crystals contain two dimers in the asymmetric unit. Requires Zn(2+) as cofactor.

The catalysed reaction is a primary alcohol + NADP(+) = an aldehyde + NADPH + H(+). It carries out the reaction butan-1-ol + NADP(+) = butanal + NADPH + H(+). The enzyme catalyses 1-propanol + NADP(+) = propanal + NADPH + H(+). It catalyses the reaction allyl alcohol + NADP(+) = acrolein + NADPH + H(+). Exhibits NADPH-dependent reductase activity for a broad range of short-chain aldehydes. Shows highest catalytic efficiency toward butanal, propanal and the highly toxic aldehydes acrolein and malondialdehyde (MDA), which are produced mainly during lipid peroxidation. Mediates resistance to reactive oxygen species (ROS) elicitors, such as paraquat and potassium tellurite, probably by protecting the cell against the toxic effects of reactive aldehydes derived from membrane lipid peroxidation. Also acts, with lower efficiency, on acetaldehyde, glyceraldehyde, glycolaldehyde, methylglyoxal, glyoxal and hydroxyacetone. Could be involved in glyoxal metabolism, by catalyzing the reduction of glyoxal to glycolaldehyde, and further to 1,2-ethandiol. Catalyzes the reduction of isobutyraldehyde (2-methylpropanal) to isobutanol, and probably contributes to the production of isobutanol. Can probably catalyze the reduction of glutaraldehyde, a widely used biocide, to 1,5-pentanediol, which is non-toxic. Overexpression of YqhD protects the cells against glutaraldehyde toxicity. Can catalyze in vitro the NADPH-dependent reduction of furfural, a natural product of lignocellulosic decomposition, to the less toxic product, furfuryl alcohol. However, it is unlikely that furfural is a physiological substrate. In terms of biological role, in contrast, Sulzenbacher et al. detected significant activities only in the presence of alcohol and NADP(+). They reported in vitro NADP(+)-dependent alcohol dehydrogenase (ADH) activity towards various alcohols, with a preference for alcohols longer than C(3), but the affinity for the substrates is poor, suggesting that these compounds are not the physiological substrates. Perez et al. did not detect dehydrogenase activity with short and medium chain alcohols such as methanol, ethanol, propanol, butanol or isopropanol. The polypeptide is NADPH-dependent aldehyde reductase YqhD (yqhD) (Escherichia coli (strain K12)).